Here is a 388-residue protein sequence, read N- to C-terminus: Queuine tRNA-ribosyltransferase (388 aa).

Asp-91 acts as the Proton acceptor in catalysis. Substrate contacts are provided by residues 91 to 95, Asp-145, Gln-190, and Gly-217; that span reads DSGGY. The RNA binding stretch occupies residues 248 to 254; the sequence is GVGAPED. Residue Asp-267 is the Nucleophile of the active site. Residues 272 to 276 form an RNA binding; important for wobble base 34 recognition region; it reads TRLAR. Zn(2+)-binding residues include Cys-305, Cys-307, Cys-310, and His-336.

It belongs to the queuine tRNA-ribosyltransferase family. As to quaternary structure, homodimer. Within each dimer, one monomer is responsible for RNA recognition and catalysis, while the other monomer binds to the replacement base PreQ1. Zn(2+) is required as a cofactor.

It catalyses the reaction 7-aminomethyl-7-carbaguanine + guanosine(34) in tRNA = 7-aminomethyl-7-carbaguanosine(34) in tRNA + guanine. It participates in tRNA modification; tRNA-queuosine biosynthesis. Catalyzes the base-exchange of a guanine (G) residue with the queuine precursor 7-aminomethyl-7-deazaguanine (PreQ1) at position 34 (anticodon wobble position) in tRNAs with GU(N) anticodons (tRNA-Asp, -Asn, -His and -Tyr). Catalysis occurs through a double-displacement mechanism. The nucleophile active site attacks the C1' of nucleotide 34 to detach the guanine base from the RNA, forming a covalent enzyme-RNA intermediate. The proton acceptor active site deprotonates the incoming PreQ1, allowing a nucleophilic attack on the C1' of the ribose to form the product. After dissociation, two additional enzymatic reactions on the tRNA convert PreQ1 to queuine (Q), resulting in the hypermodified nucleoside queuosine (7-(((4,5-cis-dihydroxy-2-cyclopenten-1-yl)amino)methyl)-7-deazaguanosine). In Dictyoglomus turgidum (strain DSM 6724 / Z-1310), this protein is Queuine tRNA-ribosyltransferase.